The chain runs to 257 residues: Phosphate import ATP-binding protein PstB (257 aa).

Positions 4–246 (LKLNDVNIYY…KKIFENPDQK (243 aa)) constitute an ABC transporter domain. 36-43 (GPSGCGKS) is a binding site for ATP.

This sequence belongs to the ABC transporter superfamily. Phosphate importer (TC 3.A.1.7) family. As to quaternary structure, the complex is composed of two ATP-binding proteins (PstB), two transmembrane proteins (PstC and PstA) and a solute-binding protein (PstS).

Its subcellular location is the cell membrane. The enzyme catalyses phosphate(out) + ATP + H2O = ADP + 2 phosphate(in) + H(+). Its function is as follows. Part of the ABC transporter complex PstSACB involved in phosphate import. Responsible for energy coupling to the transport system. The sequence is that of Phosphate import ATP-binding protein PstB from Corynebacterium glutamicum (strain ATCC 13032 / DSM 20300 / JCM 1318 / BCRC 11384 / CCUG 27702 / LMG 3730 / NBRC 12168 / NCIMB 10025 / NRRL B-2784 / 534).